The chain runs to 464 residues: ATP synthase subunit beta (464 aa).

Position 154 to 161 (154 to 161 (GGAGVGKT)) interacts with ATP.

Belongs to the ATPase alpha/beta chains family. In terms of assembly, F-type ATPases have 2 components, CF(1) - the catalytic core - and CF(0) - the membrane proton channel. CF(1) has five subunits: alpha(3), beta(3), gamma(1), delta(1), epsilon(1). CF(0) has three main subunits: a(1), b(2) and c(9-12). The alpha and beta chains form an alternating ring which encloses part of the gamma chain. CF(1) is attached to CF(0) by a central stalk formed by the gamma and epsilon chains, while a peripheral stalk is formed by the delta and b chains.

The protein localises to the cell inner membrane. It catalyses the reaction ATP + H2O + 4 H(+)(in) = ADP + phosphate + 5 H(+)(out). Functionally, produces ATP from ADP in the presence of a proton gradient across the membrane. The catalytic sites are hosted primarily by the beta subunits. The sequence is that of ATP synthase subunit beta from Blochmanniella floridana.